Consider the following 144-residue polypeptide: MWLQNLLFLNTVVCSISAPTSSPSSVTRPWQHVDAMKEALSLLNNSSEITAVMNETVEVVSEMFDPEEPKCLQTHLKLYEQGLRGSLISLKEPLRMMANHYKQHCPLTPETPCETQTITFKNFKEKLKDFLFNNPFDCWGPDQK.

The N-terminal stretch at 1–17 (MWLQNLLFLNTVVCSIS) is a signal peptide. Serine 22 and serine 24 each carry an O-linked (GalNAc...) serine glycan. Threonine 27 is a glycosylation site (O-linked (GalNAc...) threonine). Asparagine 44, asparagine 45, and asparagine 54 each carry an N-linked (GlcNAc...) asparagine glycan. 2 disulfides stabilise this stretch: cysteine 71–cysteine 113 and cysteine 105–cysteine 138.

The protein belongs to the GM-CSF family. As to quaternary structure, monomer. The signaling GM-CSF receptor complex is a dodecamer of two head-to-head hexamers of two alpha, two beta, and two ligand subunits.

The protein resides in the secreted. In terms of biological role, cytokine that stimulates the growth and differentiation of hematopoietic precursor cells from various lineages, including granulocytes, macrophages, eosinophils and erythrocytes. The polypeptide is Granulocyte-macrophage colony-stimulating factor (CSF2) (Felis catus (Cat)).